The primary structure comprises 336 residues: Immune-associated nucleotide-binding protein 6 (336 aa).

The AIG1-type G domain maps to Glu33–Gln241. The G1 stretch occupies residues Gly42–Ser49. Residues Gly42–Ala50 and Ser63 contribute to the GTP site. A G2 region spans residues Gly69–Arg73. The interval Asp91 to Gly94 is G3. The segment at Thr161–Asp164 is G4. Positions Asp200–Arg202 are G5. Asn201 contributes to the GTP binding site. The stretch at His237–Gln270 forms a coiled coil.

The protein belongs to the TRAFAC class TrmE-Era-EngA-EngB-Septin-like GTPase superfamily. AIG1/Toc34/Toc159-like paraseptin GTPase family. IAN subfamily. As to expression, mostly expressed in pollen. Also detected in lateral roots and radicles.

In Arabidopsis thaliana (Mouse-ear cress), this protein is Immune-associated nucleotide-binding protein 6.